A 577-amino-acid polypeptide reads, in one-letter code: Arginine--tRNA ligase (577 aa).

The 'HIGH' region motif lies at 122–132; that stretch reads PNVAKEMHVGH.

It belongs to the class-I aminoacyl-tRNA synthetase family. In terms of assembly, monomer.

It localises to the cytoplasm. It catalyses the reaction tRNA(Arg) + L-arginine + ATP = L-arginyl-tRNA(Arg) + AMP + diphosphate. The polypeptide is Arginine--tRNA ligase (Salmonella choleraesuis (strain SC-B67)).